Consider the following 564-residue polypeptide: Urease subunit alpha (564 aa).

Residues 126-564 (GGIDTHIHFI…LPMAQRYFLF (439 aa)) enclose the Urease domain. Ni(2+) is bound by residues His-131, His-133, and Lys-214. Lys-214 carries the post-translational modification N6-carboxylysine. A substrate-binding site is contributed by His-216. The Ni(2+) site is built by His-243 and His-269. His-317 acts as the Proton donor in catalysis. Asp-357 serves as a coordination point for Ni(2+).

Belongs to the metallo-dependent hydrolases superfamily. Urease alpha subunit family. As to quaternary structure, heterotrimer of UreA (gamma), UreB (beta) and UreC (alpha) subunits. Three heterotrimers associate to form the active enzyme. It depends on Ni cation as a cofactor. Carboxylation allows a single lysine to coordinate two nickel ions.

It localises to the cytoplasm. The catalysed reaction is urea + 2 H2O + H(+) = hydrogencarbonate + 2 NH4(+). It functions in the pathway nitrogen metabolism; urea degradation; CO(2) and NH(3) from urea (urease route): step 1/1. The polypeptide is Urease subunit alpha (Burkholderia thailandensis (strain ATCC 700388 / DSM 13276 / CCUG 48851 / CIP 106301 / E264)).